Reading from the N-terminus, the 204-residue chain is Thymidine kinase (204 aa).

ATP-binding positions include 23 to 30 (GSMFSGKT) and 95 to 98 (DEAQ). The Proton acceptor role is filled by Glu-96. Zn(2+) contacts are provided by Cys-152, Cys-155, Cys-184, and Cys-187.

It belongs to the thymidine kinase family. Homotetramer.

It is found in the cytoplasm. It catalyses the reaction thymidine + ATP = dTMP + ADP + H(+). The polypeptide is Thymidine kinase (Porphyromonas gingivalis (strain ATCC BAA-308 / W83)).